Reading from the N-terminus, the 291-residue chain is Acetyl-coenzyme A carboxylase carboxyl transferase subunit beta (291 aa).

Residues 29-291 (LWSKCPECGE…MHQQPAAVSA (263 aa)) form the CoA carboxyltransferase N-terminal domain. Zn(2+)-binding residues include Cys-33, Cys-36, Cys-52, and Cys-55. A C4-type zinc finger spans residues 33-55 (CPECGEVVYRKDLIANASVCASC).

It belongs to the AccD/PCCB family. In terms of assembly, acetyl-CoA carboxylase is a heterohexamer composed of biotin carboxyl carrier protein (AccB), biotin carboxylase (AccC) and two subunits each of ACCase subunit alpha (AccA) and ACCase subunit beta (AccD). The cofactor is Zn(2+).

The protein localises to the cytoplasm. It carries out the reaction N(6)-carboxybiotinyl-L-lysyl-[protein] + acetyl-CoA = N(6)-biotinyl-L-lysyl-[protein] + malonyl-CoA. Its pathway is lipid metabolism; malonyl-CoA biosynthesis; malonyl-CoA from acetyl-CoA: step 1/1. Its function is as follows. Component of the acetyl coenzyme A carboxylase (ACC) complex. Biotin carboxylase (BC) catalyzes the carboxylation of biotin on its carrier protein (BCCP) and then the CO(2) group is transferred by the transcarboxylase to acetyl-CoA to form malonyl-CoA. This is Acetyl-coenzyme A carboxylase carboxyl transferase subunit beta from Synechococcus sp. (strain RCC307).